The following is a 37-amino-acid chain: Large ribosomal subunit protein bL36c (37 aa).

Belongs to the bacterial ribosomal protein bL36 family.

The protein resides in the plastid. The protein localises to the chloroplast. This chain is Large ribosomal subunit protein bL36c, found in Populus alba (White poplar).